Consider the following 255-residue polypeptide: Increased copper sensitivity protein 2 (255 aa).

A compositionally biased stretch (basic and acidic residues) spans 1–12; the sequence is MGKFEQKERERI. 2 disordered regions span residues 1 to 32 and 82 to 142; these read MGKF…KSLG and PGDK…RKSH. The segment covering 13 to 30 has biased composition (polar residues); the sequence is STFSFPTTGSQSSTSIKS. Residues 131–142 are compositionally biased toward basic residues; the sequence is SGRRKSYHRKSH. A Phosphoserine modification is found at serine 217.

This Saccharomyces cerevisiae (strain ATCC 204508 / S288c) (Baker's yeast) protein is Increased copper sensitivity protein 2 (ICS2).